The following is a 171-amino-acid chain: MENFYKVGTIVNTQGLQGEVRVLPSTDFANERFSKGAVLALFDDKDNYIQDLKVKSGRLQKNFYVVKFEGFYHINDVEKYKGYVVKIAQENQEELNDGEFYYHEIIGSDVYENDILIGQISEILQPGANDVWVVKRKGKRDLLLPYIPPVVLKVDVAQHRVDVDIMEGLDD.

The region spanning 97 to 169 (DGEFYYHEII…RVDVDIMEGL (73 aa)) is the PRC barrel domain.

The protein belongs to the RimM family. Binds ribosomal protein uS19.

The protein localises to the cytoplasm. In terms of biological role, an accessory protein needed during the final step in the assembly of 30S ribosomal subunit, possibly for assembly of the head region. Essential for efficient processing of 16S rRNA. May be needed both before and after RbfA during the maturation of 16S rRNA. It has affinity for free ribosomal 30S subunits but not for 70S ribosomes. In Lactococcus lactis subsp. cremoris (strain SK11), this protein is Ribosome maturation factor RimM.